A 478-amino-acid polypeptide reads, in one-letter code: Membrane-bound lytic murein transglycosylase F (478 aa).

An N-terminal signal peptide occupies residues 1–22 (MTRFLFAIILGFLLTACQQVTV). Residues 23-257 (EETEYVPHKL…HLNEKYFGHV (235 aa)) form a non-LT domain region. The tract at residues 258-478 (KRFDYIDTRA…PGTLSPDKPK (221 aa)) is LT domain. Residue Glu302 is part of the active site. A disordered region spans residues 446–478 (SKQQNSDEEEPSDLASEDGPAPVPGTLSPDKPK). Over residues 451 to 461 (SDEEEPSDLAS) the composition is skewed to acidic residues.

In the N-terminal section; belongs to the bacterial solute-binding protein 3 family. This sequence in the C-terminal section; belongs to the transglycosylase Slt family.

The protein resides in the cell outer membrane. It carries out the reaction Exolytic cleavage of the (1-&gt;4)-beta-glycosidic linkage between N-acetylmuramic acid (MurNAc) and N-acetylglucosamine (GlcNAc) residues in peptidoglycan, from either the reducing or the non-reducing ends of the peptidoglycan chains, with concomitant formation of a 1,6-anhydrobond in the MurNAc residue.. In terms of biological role, murein-degrading enzyme that degrades murein glycan strands and insoluble, high-molecular weight murein sacculi, with the concomitant formation of a 1,6-anhydromuramoyl product. Lytic transglycosylases (LTs) play an integral role in the metabolism of the peptidoglycan (PG) sacculus. Their lytic action creates space within the PG sacculus to allow for its expansion as well as for the insertion of various structures such as secretion systems and flagella. In Shewanella sp. (strain MR-4), this protein is Membrane-bound lytic murein transglycosylase F.